A 262-amino-acid polypeptide reads, in one-letter code: Small ribosomal subunit protein eS1 (262 aa).

This sequence belongs to the eukaryotic ribosomal protein eS1 family. Component of the small ribosomal subunit. Mature ribosomes consist of a small (40S) and a large (60S) subunit. The 40S subunit contains about 33 different proteins and 1 molecule of RNA (18S). The 60S subunit contains about 49 different proteins and 3 molecules of RNA (25S, 5.8S and 5S).

The protein resides in the cytoplasm. The chain is Small ribosomal subunit protein eS1 from Plasmodium knowlesi (strain H).